A 199-amino-acid polypeptide reads, in one-letter code: Transgelin-3 (199 aa).

The 113-residue stretch at 24–136 (ADLENKLVDW…RTLMALGSVA (113 aa)) folds into the Calponin-homology (CH) domain. Ser-163 carries the phosphoserine modification. A Calponin-like repeat occupies 174–199 (IGLQMGSNKGASQAGMTGYGMPRQIM). Polar residues predominate over residues 176 to 188 (LQMGSNKGASQAG). The tract at residues 176–199 (LQMGSNKGASQAGMTGYGMPRQIM) is disordered.

It belongs to the calponin family.

The polypeptide is Transgelin-3 (TAGLN3) (Pongo abelii (Sumatran orangutan)).